The sequence spans 156 residues: Baculoviral IAP repeat-containing protein 5.2 (156 aa).

One copy of the BIR repeat lies at 30–100; sequence RLSTFANWPF…KHSPSCLFIA (71 aa). Residue Thr-46 is modified to Phosphothreonine; by CDK1. Cys-69, Cys-72, His-89, and Cys-96 together coordinate Zn(2+).

It belongs to the IAP family. Component of the CPC at least composed of survivin/birc5, incenp, cdca8/borealin and/or cdca9/dasra-A, and aurkb/aurora-B. Interacts directly with incenp (via N-terminus). Interacts with rxra; the interaction is stronger in the absence of 9-cis retinoic acids. Post-translationally, ubiquitination is required for centrosome-targeting.

It localises to the cytoplasm. The protein resides in the nucleus. Its subcellular location is the chromosome. The protein localises to the centromere. It is found in the cytoskeleton. It localises to the spindle. Functionally, component of the chromosomal passenger complex (CPC), a complex that acts as a key regulator of mitosis. The CPC complex has essential functions at the centromere in ensuring correct chromosome alignment and segregation and is required for chromatin-induced microtubule stabilization and spindle assembly. Does not appear to exhibit anti-apoptotic activity. Plays a role in increasing blood vessel size during development. The chain is Baculoviral IAP repeat-containing protein 5.2 (birc5.2) from Xenopus tropicalis (Western clawed frog).